The chain runs to 246 residues: Small ribosomal subunit protein uS2 (246 aa).

It belongs to the universal ribosomal protein uS2 family. Component of the small ribosomal subunit. Mature ribosomes consist of a small (40S) and a large (60S) subunit. The 40S subunit contains about 33 different proteins and 1 molecule of RNA (18S). The 60S subunit contains about 49 different proteins and 3 molecules of RNA (25S, 5.8S and 5S). Interacts with ribosomal protein S21.

It localises to the cytoplasm. In terms of biological role, required for the assembly and/or stability of the 40S ribosomal subunit. Required for the processing of the 20S rRNA-precursor to mature 18S rRNA in a late step of the maturation of 40S ribosomal subunits. This is Small ribosomal subunit protein uS2 from Leishmania infantum.